We begin with the raw amino-acid sequence, 121 residues long: Large ribosomal subunit protein bL12 (121 aa).

This sequence belongs to the bacterial ribosomal protein bL12 family. In terms of assembly, homodimer. Part of the ribosomal stalk of the 50S ribosomal subunit. Forms a multimeric L10(L12)X complex, where L10 forms an elongated spine to which 2 to 4 L12 dimers bind in a sequential fashion. Binds GTP-bound translation factors.

Functionally, forms part of the ribosomal stalk which helps the ribosome interact with GTP-bound translation factors. Is thus essential for accurate translation. The sequence is that of Large ribosomal subunit protein bL12 from Clostridium beijerinckii (strain ATCC 51743 / NCIMB 8052) (Clostridium acetobutylicum).